The primary structure comprises 389 residues: Putative F-box protein At1g47790 (389 aa).

One can recognise an F-box domain in the interval 19-65; the sequence is SKPTSSFPLDLASEILLRLPVKSVVRFRCVSKLWSSIITDPYFIKTY.

This is Putative F-box protein At1g47790 from Arabidopsis thaliana (Mouse-ear cress).